The chain runs to 679 residues: Cysteine-rich receptor-like protein kinase 29 (679 aa).

The signal sequence occupies residues 1-23; the sequence is MEHVRVIFFFACFLTLAPFHAFA. The Extracellular segment spans residues 24 to 286; it reads QVDSYEFDPD…RTGKGKGGSK (263 aa). Gnk2-homologous domains follow at residues 30–134 and 140–249; these read FDPD…NRTI and TNPT…TWRF. N-linked (GlcNAc...) asparagine glycans are attached at residues asparagine 41, asparagine 45, asparagine 71, asparagine 107, asparagine 131, and asparagine 187. Positions 260 to 281 are disordered; sequence PPAIQPADSPQSAARTERTGKG. The helical transmembrane segment at 287–307 threads the bilayer; that stretch reads VIIAIVIPILLVALLAICLCL. The Cytoplasmic segment spans residues 308 to 679; sequence VLKWRKNKSG…DVTVSEFSPR (372 aa). Positions 357-637 constitute a Protein kinase domain; it reads FSSENELGRG…SLMLNSYSFT (281 aa). ATP contacts are provided by residues 363–371 and lysine 385; that span reads LGRGGFGSV. Tyrosine 430 carries the post-translational modification Phosphotyrosine. Aspartate 482 serves as the catalytic Proton acceptor. Serine 486 bears the Phosphoserine mark. Residue threonine 524 is modified to Phosphothreonine. Tyrosine 532 carries the phosphotyrosine modification. The disordered stretch occupies residues 659-679; sequence SSTEGLQMSSNDVTVSEFSPR.

It belongs to the protein kinase superfamily. Ser/Thr protein kinase family. CRK subfamily.

The protein resides in the membrane. It carries out the reaction L-seryl-[protein] + ATP = O-phospho-L-seryl-[protein] + ADP + H(+). The enzyme catalyses L-threonyl-[protein] + ATP = O-phospho-L-threonyl-[protein] + ADP + H(+). The polypeptide is Cysteine-rich receptor-like protein kinase 29 (CRK29) (Arabidopsis thaliana (Mouse-ear cress)).